The chain runs to 636 residues: Chaperone protein HtpG (636 aa).

Residues Met1–Arg342 form an a; substrate-binding region. Residues Glu343 to Lys558 are b. Residues Met559–Leu636 are c.

It belongs to the heat shock protein 90 family. As to quaternary structure, homodimer.

It localises to the cytoplasm. Molecular chaperone. Has ATPase activity. The chain is Chaperone protein HtpG from Salinispora tropica (strain ATCC BAA-916 / DSM 44818 / JCM 13857 / NBRC 105044 / CNB-440).